Here is a 330-residue protein sequence, read N- to C-terminus: DNA-directed RNA polymerase subunit alpha (330 aa).

Positions 1–225 (MSDLAIPTIS…KQFAALVSHN (225 aa)) are alpha N-terminal domain (alpha-NTD). Residues 237–330 (VKYAIPEEKY…KKKNKGMDEA (94 aa)) form an alpha C-terminal domain (alpha-CTD) region.

This sequence belongs to the RNA polymerase alpha chain family. In terms of assembly, homodimer. The RNAP catalytic core consists of 2 alpha, 1 beta, 1 beta' and 1 omega subunit. When a sigma factor is associated with the core the holoenzyme is formed, which can initiate transcription.

It carries out the reaction RNA(n) + a ribonucleoside 5'-triphosphate = RNA(n+1) + diphosphate. Its function is as follows. DNA-dependent RNA polymerase catalyzes the transcription of DNA into RNA using the four ribonucleoside triphosphates as substrates. The chain is DNA-directed RNA polymerase subunit alpha from Dehalococcoides mccartyi (strain ATCC BAA-2266 / KCTC 15142 / 195) (Dehalococcoides ethenogenes (strain 195)).